The primary structure comprises 143 residues: Transcription antitermination protein NusB (143 aa).

The protein belongs to the NusB family.

Involved in transcription antitermination. Required for transcription of ribosomal RNA (rRNA) genes. Binds specifically to the boxA antiterminator sequence of the ribosomal RNA (rrn) operons. The chain is Transcription antitermination protein NusB from Clostridium botulinum (strain ATCC 19397 / Type A).